Here is a 219-residue protein sequence, read N- to C-terminus: uncharacterized protein (219 aa).

The helical transmembrane segment at V13–F32 threads the bilayer.

It localises to the membrane. This is an uncharacterized protein from Aquifex aeolicus (strain VF5).